Reading from the N-terminus, the 54-residue chain is uncharacterized protein (54 aa).

The span at 23 to 35 shows a compositional bias: basic and acidic residues; it reads DVMQEGETAKELN. A disordered region spans residues 23–54; that stretch reads DVMQEGETAKELNYEGEDMQATSSAQNRQTSV. Residues 42–54 show a composition bias toward polar residues; the sequence is QATSSAQNRQTSV.

This is an uncharacterized protein from Bacillus subtilis (strain 168).